A 240-amino-acid chain; its full sequence is Purine nucleoside phosphorylase DeoD-type (240 aa).

Histidine 5 serves as a coordination point for a purine D-ribonucleoside. Phosphate-binding positions include glycine 21, arginine 25, arginine 44, and 88–91; that span reads RVGS. A purine D-ribonucleoside is bound by residues 181-183 and 205-206; these read EME and SD. Aspartate 206 functions as the Proton donor in the catalytic mechanism.

Belongs to the PNP/UDP phosphorylase family. As to quaternary structure, homohexamer; trimer of homodimers.

The enzyme catalyses a purine D-ribonucleoside + phosphate = a purine nucleobase + alpha-D-ribose 1-phosphate. It catalyses the reaction a purine 2'-deoxy-D-ribonucleoside + phosphate = a purine nucleobase + 2-deoxy-alpha-D-ribose 1-phosphate. In terms of biological role, catalyzes the reversible phosphorolytic breakdown of the N-glycosidic bond in the beta-(deoxy)ribonucleoside molecules, with the formation of the corresponding free purine bases and pentose-1-phosphate. The polypeptide is Purine nucleoside phosphorylase DeoD-type (Enterobacter sp. (strain 638)).